We begin with the raw amino-acid sequence, 155 residues long: Basic phospholipase A2 PC1 (155 aa).

Residues 1-21 form the signal peptide; that stretch reads MYPAHLLVLLAVCVSLLGASA. A propeptide spanning residues 22–27 is cleaved from the precursor; the sequence is ISNRPR. Cystine bridges form between Cys-38–Cys-98, Cys-54–Cys-144, Cys-56–Cys-72, Cys-71–Cys-125, Cys-78–Cys-118, Cys-87–Cys-111, and Cys-105–Cys-116. Ca(2+)-binding residues include Tyr-55, Gly-57, and Gly-59. Residue His-75 is part of the active site. Asp-76 is a binding site for Ca(2+). The active site involves Asp-119.

Belongs to the phospholipase A2 family. Group I subfamily. D49 sub-subfamily. Ca(2+) serves as cofactor. Expressed by the venom gland.

The protein localises to the secreted. The enzyme catalyses a 1,2-diacyl-sn-glycero-3-phosphocholine + H2O = a 1-acyl-sn-glycero-3-phosphocholine + a fatty acid + H(+). Its function is as follows. Snake venom phospholipase A2 (PLA2) that inhibits neuromuscular transmission by blocking acetylcholine release from the nerve termini. PLA2 catalyzes the calcium-dependent hydrolysis of the 2-acyl groups in 3-sn-phosphoglycerides. The protein is Basic phospholipase A2 PC1 of Laticauda colubrina (Yellow-lipped sea krait).